Consider the following 566-residue polypeptide: Insulinoma-associated protein 2 (566 aa).

Residues 1–20 form an SNAG domain region; that stretch reads MPRGFLVKRTKRTGGLYRVR. Residues 32–117 form a disordered region; it reads QGAPPFLEEA…PSPSPAKPAG (86 aa). A compositionally biased stretch (pro residues) spans 103–113; that stretch reads GPSPSPSPSPA. The segment at 263-283 adopts a C2H2-type 1; atypical zinc-finger fold; it reads FICQLCKEQYADPFALAQHRC. The segment at 291 to 313 adopts a C2H2-type 2 zinc-finger fold; that stretch reads YRCPECDKVFSCPANLASHRRWH. Residues 310 to 418 form a disordered region; it reads RRWHKPRPAA…RRVPVPGSTS (109 aa). A compositionally biased stretch (low complexity) spans 318–348; the sequence is AAANAATVSSADGKPPSSSSSSSRDSGAIAS. Basic and acidic residues predominate over residues 352-369; the sequence is EGKENSRIERTADQHPQA. 3 consecutive C2H2-type zinc fingers follow at residues 426–448, 470–492, and 525–548; these read FVCP…LSTH, FACP…RLWH, and FSCK…NKCH.

In terms of tissue distribution, expressed in heart, liver, skeletal muscle, kidney and pancreas, and, to a lesser extent, in brain, lung and spleen. In the pancreas, expressed in islet cells, including insulin- and glucagon-producing alpha- and beta-cells, but not in acinar cells (at protein level). Detected in adrenal glands, particularly in the deeper layer of the cortex (at protein level).

Its subcellular location is the cytoplasm. The protein resides in the nucleus. Functionally, may function as a growth suppressor or tumor suppressor in liver cells and in certain neurons. The sequence is that of Insulinoma-associated protein 2 (INSM2) from Homo sapiens (Human).